The sequence spans 298 residues: Quinolinate synthase (298 aa).

Residues histidine 19 and serine 36 each coordinate iminosuccinate. Residue cysteine 81 participates in [4Fe-4S] cluster binding. Iminosuccinate-binding positions include 107 to 109 and serine 124; that span reads YVN. Cysteine 168 contacts [4Fe-4S] cluster. Residues 193 to 195 and threonine 210 each bind iminosuccinate; that span reads HPE. Position 254 (cysteine 254) interacts with [4Fe-4S] cluster.

The protein belongs to the quinolinate synthase family. Type 2 subfamily. [4Fe-4S] cluster is required as a cofactor.

The protein resides in the cytoplasm. It carries out the reaction iminosuccinate + dihydroxyacetone phosphate = quinolinate + phosphate + 2 H2O + H(+). The protein operates within cofactor biosynthesis; NAD(+) biosynthesis; quinolinate from iminoaspartate: step 1/1. Its activity is regulated as follows. Inhibited by 4,5 dithiohydroxyphthalic acid (DTHPA) analogs, which bind to the catalytic iron site of the [4Fe-4S] cluster. Functionally, catalyzes the condensation of iminoaspartate with dihydroxyacetone phosphate to form quinolinate. This Thermotoga maritima (strain ATCC 43589 / DSM 3109 / JCM 10099 / NBRC 100826 / MSB8) protein is Quinolinate synthase.